The primary structure comprises 503 residues: Aromatase (503 aa).

Residues 21-41 (VTVSAMPLLLIMGLLLLIWNC) form a helical membrane-spanning segment. Residues Asp309 and Met374 each coordinate substrate. Residue Cys437 coordinates heme.

The protein belongs to the cytochrome P450 family. Heme is required as a cofactor.

It localises to the endoplasmic reticulum membrane. It is found in the microsome membrane. The enzyme catalyses testosterone + 3 reduced [NADPH--hemoprotein reductase] + 3 O2 = 17beta-estradiol + formate + 3 oxidized [NADPH--hemoprotein reductase] + 4 H2O + 4 H(+). It catalyses the reaction androst-4-ene-3,17-dione + 3 reduced [NADPH--hemoprotein reductase] + 3 O2 = estrone + formate + 3 oxidized [NADPH--hemoprotein reductase] + 4 H2O + 4 H(+). The catalysed reaction is androst-4-ene-3,17-dione + reduced [NADPH--hemoprotein reductase] + O2 = 19-hydroxyandrost-4-ene-3,17-dione + oxidized [NADPH--hemoprotein reductase] + H2O + H(+). It carries out the reaction 19-hydroxyandrost-4-ene-3,17-dione + reduced [NADPH--hemoprotein reductase] + O2 = 19-oxo-androst-4-ene-3,17-dione + oxidized [NADPH--hemoprotein reductase] + 2 H2O + H(+). The enzyme catalyses 19-oxo-androst-4-ene-3,17-dione + reduced [NADPH--hemoprotein reductase] + O2 = estrone + formate + oxidized [NADPH--hemoprotein reductase] + H2O + 2 H(+). It catalyses the reaction estrone + reduced [NADPH--hemoprotein reductase] + O2 = 2-hydroxyestrone + oxidized [NADPH--hemoprotein reductase] + H2O + H(+). The catalysed reaction is 17beta-hydroxy-5alpha-androstan-3-one + reduced [NADPH--hemoprotein reductase] + O2 = 17beta,19-dihydroxy-3-oxo-5alpha-androstanone + oxidized [NADPH--hemoprotein reductase] + H2O + H(+). It carries out the reaction 17beta,19-dihydroxy-3-oxo-5alpha-androstanone + reduced [NADPH--hemoprotein reductase] + O2 = 17beta-hydroxy-3,19-dioxo-5alpha-androstanone + oxidized [NADPH--hemoprotein reductase] + 2 H2O + H(+). The enzyme catalyses 17beta-hydroxy-3,19-dioxo-5alpha-androstanone + reduced [NADPH--hemoprotein reductase] + O2 = 17beta-hydroxy-3-oxo-19-nor-5alpha-androst-1-ene + formate + oxidized [NADPH--hemoprotein reductase] + H2O + 2 H(+). The protein operates within steroid hormone biosynthesis. In terms of biological role, a cytochrome P450 monooxygenase that catalyzes the conversion of C19 androgens, androst-4-ene-3,17-dione (androstenedione) and testosterone to the C18 estrogens, estrone and estradiol, respectively. Catalyzes three successive oxidations of C19 androgens: two conventional oxidations at C19 yielding 19-hydroxy and 19-oxo/19-aldehyde derivatives, followed by a third oxidative aromatization step that involves C1-beta hydrogen abstraction combined with cleavage of the C10-C19 bond to yield a phenolic A ring and formic acid. Alternatively, the third oxidative reaction yields a 19-norsteroid and formic acid. Converts dihydrotestosterone to delta1,10-dehydro 19-nordihydrotestosterone and may play a role in homeostasis of this potent androgen. Also displays 2-hydroxylase activity toward estrone. Mechanistically, uses molecular oxygen inserting one oxygen atom into a substrate, and reducing the second into a water molecule, with two electrons provided by NADPH via cytochrome P450 reductase (CPR; NADPH-ferrihemoprotein reductase). In Mus musculus (Mouse), this protein is Aromatase (Cyp19a1).